We begin with the raw amino-acid sequence, 466 residues long: Ribulose bisphosphate carboxylase large chain (466 aa).

An N6,N6,N6-trimethyllysine modification is found at lysine 5. Substrate is bound by residues asparagine 114 and threonine 164. Catalysis depends on lysine 166, which acts as the Proton acceptor. A substrate-binding site is contributed by lysine 168. 3 residues coordinate Mg(2+): lysine 192, aspartate 194, and glutamate 195. Lysine 192 bears the N6-carboxylysine mark. Histidine 285 functions as the Proton acceptor in the catalytic mechanism. Residues arginine 286, histidine 318, and serine 370 each contribute to the substrate site.

It belongs to the RuBisCO large chain family. Type I subfamily. In terms of assembly, heterohexadecamer of 8 large chains and 8 small chains; disulfide-linked. The disulfide link is formed within the large subunit homodimers. Requires Mg(2+) as cofactor. Post-translationally, the disulfide bond which can form in the large chain dimeric partners within the hexadecamer appears to be associated with oxidative stress and protein turnover.

It localises to the plastid. The protein resides in the chloroplast. It carries out the reaction 2 (2R)-3-phosphoglycerate + 2 H(+) = D-ribulose 1,5-bisphosphate + CO2 + H2O. It catalyses the reaction D-ribulose 1,5-bisphosphate + O2 = 2-phosphoglycolate + (2R)-3-phosphoglycerate + 2 H(+). Its function is as follows. RuBisCO catalyzes two reactions: the carboxylation of D-ribulose 1,5-bisphosphate, the primary event in carbon dioxide fixation, as well as the oxidative fragmentation of the pentose substrate in the photorespiration process. Both reactions occur simultaneously and in competition at the same active site. This Aesculus pavia (Red buckeye) protein is Ribulose bisphosphate carboxylase large chain.